The sequence spans 458 residues: MSLWGGRFQDGSSAMFRTVNDSLPFDRVLASQDIRGSIAWARAIAKAGVLNQDEHQQLEEALKALLVKADAGELDFDASSEEDIHSFVEATLIEQLGDVARKLHTGRSRNDQVATDFRLWTREHVDLLVEDVEAVIASLVGNADVNQDVILPGYTHLQRAQPVRYPHWCLAYVEMLKRDLSRLHDLKARLNQCPLGSGALAGTTYPIDRQAIAEELGFDSPCINSLDAVSDRDYVLELLFVASTSMMHLSRMAEDLIFYNSGEAGFIQLGDAVTSGSSLMPQKKNPDALELMRGKCGRVFGSLQALLVTMKGLPLAYNKDMQEDKEGLFDATNQWHICLRIACEVVDSIKLDSERCAKAAREGYANATELADYLVDKGIPFRTAHDISGRVVLDALEKKKAIEELTIAELKVYSDVIEEDVYPVLQLEYLVNKRDILGGTGIKPVLEALANAKASFKK.

The protein belongs to the lyase 1 family. Argininosuccinate lyase subfamily.

The protein localises to the cytoplasm. It catalyses the reaction 2-(N(omega)-L-arginino)succinate = fumarate + L-arginine. It functions in the pathway amino-acid biosynthesis; L-arginine biosynthesis; L-arginine from L-ornithine and carbamoyl phosphate: step 3/3. This is Argininosuccinate lyase from Pseudoalteromonas atlantica (strain T6c / ATCC BAA-1087).